Here is a 352-residue protein sequence, read N- to C-terminus: MGFAEWRLRNKYWTIYIVPLVVLLLMIYGTWAYCHKLCYERVYRDFGHKATAIGLICTCCVLDALIIAIWVLIVSCGPGHQPGVAPHLLVDSADLENTTVAPNCYQSDPHGYPVWCSNCQSLKVGRTKHSSHQGHCVPRFDHYCVWLGAVIGFKNYRLFVQFVFYFAVLLMIVWITISVYIRDIRQYHARLNANLIVLLIISGIGWLMTSGLFVSYIYYMSQNLTSIEVIDLKKRKRTPELSMQRLYCYYNSDDHYRYVVKLDNDFKGSVYKKHWLKNIKEFMGSNPMLWFIPLPQYWHESPLANGERDVNTIVSPYQEEVGPHTIDYIKKRIESGEYIHKFKEPGREKTHL.

The next 2 helical transmembrane spans lie at 12-32 and 53-73; these read YWTIYIVPLVVLLLMIYGTWA and IGLICTCCVLDALIIAIWVLI. Residues 114–164 form the DHHC domain; the sequence is VWCSNCQSLKVGRTKHSSHQGHCVPRFDHYCVWLGAVIGFKNYRLFVQFVF. Cysteine 144 (S-palmitoyl cysteine intermediate) is an active-site residue. 2 helical membrane-spanning segments follow: residues 159–179 and 195–215; these read FVQFVFYFAVLLMIVWITISV and LIVLLIISGIGWLMTSGLFVS.

It belongs to the DHHC palmitoyltransferase family. PFA5 subfamily.

It localises to the membrane. The catalysed reaction is L-cysteinyl-[protein] + hexadecanoyl-CoA = S-hexadecanoyl-L-cysteinyl-[protein] + CoA. The sequence is that of Palmitoyltransferase PFA5 (PFA5) from Candida glabrata (strain ATCC 2001 / BCRC 20586 / JCM 3761 / NBRC 0622 / NRRL Y-65 / CBS 138) (Yeast).